A 632-amino-acid polypeptide reads, in one-letter code: 1-deoxy-D-xylulose-5-phosphate synthase (632 aa).

Thiamine diphosphate-binding positions include histidine 77 and 118-120; that span reads GHA. Mg(2+) is bound at residue aspartate 149. Thiamine diphosphate is bound by residues 150–151, asparagine 178, phenylalanine 287, and glutamate 372; that span reads GS. Position 178 (asparagine 178) interacts with Mg(2+).

It belongs to the transketolase family. DXPS subfamily. In terms of assembly, homodimer. It depends on Mg(2+) as a cofactor. Requires thiamine diphosphate as cofactor.

The catalysed reaction is D-glyceraldehyde 3-phosphate + pyruvate + H(+) = 1-deoxy-D-xylulose 5-phosphate + CO2. It participates in metabolic intermediate biosynthesis; 1-deoxy-D-xylulose 5-phosphate biosynthesis; 1-deoxy-D-xylulose 5-phosphate from D-glyceraldehyde 3-phosphate and pyruvate: step 1/1. Catalyzes the acyloin condensation reaction between C atoms 2 and 3 of pyruvate and glyceraldehyde 3-phosphate to yield 1-deoxy-D-xylulose-5-phosphate (DXP). The chain is 1-deoxy-D-xylulose-5-phosphate synthase from Chlorobium luteolum (strain DSM 273 / BCRC 81028 / 2530) (Pelodictyon luteolum).